The following is a 416-amino-acid chain: Enterobactin exporter EntS (416 aa).

Topologically, residues Met1 to Ala21 are cytoplasmic. A helical membrane pass occupies residues Val22–Val42. Topologically, residues Gln43–Gly55 are periplasmic. The helical transmembrane segment at Leu56–Ala76 threads the bilayer. The Cytoplasmic portion of the chain corresponds to Asp77 to Lys83. Residues Val84–Leu104 traverse the membrane as a helical segment. At Leu105–Ser109 the chain is on the periplasmic side. Residues Leu110–Ala130 form a helical membrane-spanning segment. Residues Leu131–Arg156 lie on the Cytoplasmic side of the membrane. The chain crosses the membrane as a helical span at residues Leu157 to Trp177. Asn178 is a topological domain (periplasmic). A helical transmembrane segment spans residues Tyr179–Leu199. The Cytoplasmic portion of the chain corresponds to Pro200–Arg218. Residues Phe219 to Ala239 form a helical membrane-spanning segment. At Ser240–Ser256 the chain is on the periplasmic side. The chain crosses the membrane as a helical span at residues Ala257–Thr277. Over Ser278–Pro287 the chain is Cytoplasmic. A helical membrane pass occupies residues Gly288–Leu307. The Periplasmic portion of the chain corresponds to Met308–Leu313. Residues Gly314–Leu336 form a helical membrane-spanning segment. The Cytoplasmic portion of the chain corresponds to Gln337–Asn356. The chain crosses the membrane as a helical span at residues Val357–Val377. Residue Ala378 is a topological domain, periplasmic. A helical membrane pass occupies residues Ser379–Val399. Over Glu400 to Ser416 the chain is Cytoplasmic.

Belongs to the major facilitator superfamily. EntS (TC 2.A.1.38) family.

It is found in the cell inner membrane. In terms of biological role, component of an export pathway for enterobactin. The sequence is that of Enterobactin exporter EntS from Shigella boydii serotype 18 (strain CDC 3083-94 / BS512).